Consider the following 58-residue polypeptide: Large ribosomal subunit protein uL30 (58 aa).

Belongs to the universal ribosomal protein uL30 family. In terms of assembly, part of the 50S ribosomal subunit.

This Pseudomonas putida (strain W619) protein is Large ribosomal subunit protein uL30.